A 347-amino-acid polypeptide reads, in one-letter code: NADH-quinone oxidoreductase subunit H (347 aa).

9 helical membrane-spanning segments follow: residues 13-33 (LIIA…VAYL), 50-70 (PNVV…KFVF), 82-102 (GVFL…WAVI), 115-135 (VGIL…IMGG), 161-181 (IGFV…TDIV), 198-218 (FLDW…ISAL), 248-268 (FLLF…LMTV), 286-306 (VPGI…FAMV), and 325-345 (VFLP…KVFG).

This sequence belongs to the complex I subunit 1 family. As to quaternary structure, NDH-1 is composed of 14 different subunits. Subunits NuoA, H, J, K, L, M, N constitute the membrane sector of the complex.

It is found in the cell inner membrane. The catalysed reaction is a quinone + NADH + 5 H(+)(in) = a quinol + NAD(+) + 4 H(+)(out). NDH-1 shuttles electrons from NADH, via FMN and iron-sulfur (Fe-S) centers, to quinones in the respiratory chain. The immediate electron acceptor for the enzyme in this species is believed to be ubiquinone. Couples the redox reaction to proton translocation (for every two electrons transferred, four hydrogen ions are translocated across the cytoplasmic membrane), and thus conserves the redox energy in a proton gradient. This subunit may bind ubiquinone. This is NADH-quinone oxidoreductase subunit H from Brucella ovis (strain ATCC 25840 / 63/290 / NCTC 10512).